A 410-amino-acid chain; its full sequence is Argininosuccinate synthase (410 aa).

ATP contacts are provided by residues 10–18 (AYSGGLDTS) and A37. 2 residues coordinate L-citrulline: Y90 and S95. G120 contributes to the ATP binding site. Residues T122, N126, and D127 each contribute to the L-aspartate site. N126 contributes to the L-citrulline binding site. 5 residues coordinate L-citrulline: R130, S182, S191, E267, and Y279.

The protein belongs to the argininosuccinate synthase family. Type 1 subfamily. Homotetramer.

It localises to the cytoplasm. The enzyme catalyses L-citrulline + L-aspartate + ATP = 2-(N(omega)-L-arginino)succinate + AMP + diphosphate + H(+). It functions in the pathway amino-acid biosynthesis; L-arginine biosynthesis; L-arginine from L-ornithine and carbamoyl phosphate: step 2/3. The protein is Argininosuccinate synthase of Polynucleobacter asymbioticus (strain DSM 18221 / CIP 109841 / QLW-P1DMWA-1) (Polynucleobacter necessarius subsp. asymbioticus).